We begin with the raw amino-acid sequence, 324 residues long: Probable UDP-sugar transporter protein SLC35A4 (324 aa).

Residues 1–18 (MSVEDGGMPGLARPKQAR) are Cytoplasmic-facing. Residues 19–39 (WTLMLFLSTAMYGAHAPFLAL) traverse the membrane as a helical segment. Residues 40 to 52 (CHVDGRVPFRPSS) lie on the Lumenal side of the membrane. Residues 53-73 (AVLLTELTKLLLCAFSLLVGW) form a helical membrane-spanning segment. Residues 74-85 (QTWPQGTPPWRQ) are Cytoplasmic-facing. The helical transmembrane segment at 86 to 106 (AAPFALSALLYGANNNLVIYL) threads the bilayer. The Lumenal portion of the chain corresponds to 107-142 (QRYMDPSTYQVLSNLKIGSTALLYCLCLGHRLSARQ). The helical transmembrane segment at 143–163 (GLALLLLMAAGACYASGGFQE) threads the bilayer. Residues 164–180 (PGNTLPGPRSAAGARPM) lie on the Cytoplasmic side of the membrane. Residues 181 to 201 (PLHITPLGLLLLILYCLISGL) form a helical membrane-spanning segment. Residues 202 to 214 (SSVYTELIMKRQR) are Lumenal-facing. A helical transmembrane segment spans residues 215 to 235 (LPLALQNLFLYTFGVILNLGL). The Cytoplasmic portion of the chain corresponds to 236-248 (YAGSGPGPGFLEG). The helical transmembrane segment at 249-271 (FSGWAVLVVLNQAVNGLLMSAVM) threads the bilayer. The Lumenal portion of the chain corresponds to 272–279 (KHGSSITR). The chain crosses the membrane as a helical span at residues 280 to 300 (LFIVSCSLVVNAVLSAVLLQL). Over 301–324 (QLTATFFLAALLIGLAVCLYYGSP) the chain is Cytoplasmic.

The protein belongs to the nucleotide-sugar transporter family. SLC35A subfamily. Found in a complex with SLC35A2 and SLC35A3. In terms of tissue distribution, expressed in the kidney, lung, testis, and prostate. Expressed in the brain by sets of neurons, such as the pyramidal cells of the cortex, the Purkinje cells of the cerebellum, and the motoneurons of the brainstem.

Its subcellular location is the golgi apparatus membrane. It carries out the reaction CDP-L-ribitol(in) + CDP(out) = CDP-L-ribitol(out) + CDP(in). Its function is as follows. Mediates the transport of CDP-ribitol. Does not exhibit CMP-sialic acid, UDP-galactose and UDP-N-acetylglucosamine transport activity. The chain is Probable UDP-sugar transporter protein SLC35A4 from Rattus norvegicus (Rat).